The chain runs to 508 residues: uncharacterized protein (508 aa).

Its subcellular location is the virion. This is an uncharacterized protein from Acanthamoeba polyphaga mimivirus (APMV).